The following is a 185-amino-acid chain: Ribosome maturation factor RimM (185 aa).

Positions 106 to 185 (SGEYYWKDLL…IIEVDWDPGF (80 aa)) constitute a PRC barrel domain.

It belongs to the RimM family. As to quaternary structure, binds ribosomal protein uS19.

Its subcellular location is the cytoplasm. An accessory protein needed during the final step in the assembly of 30S ribosomal subunit, possibly for assembly of the head region. Essential for efficient processing of 16S rRNA. May be needed both before and after RbfA during the maturation of 16S rRNA. It has affinity for free ribosomal 30S subunits but not for 70S ribosomes. This Sodalis glossinidius (strain morsitans) protein is Ribosome maturation factor RimM.